The chain runs to 306 residues: Ethylmalonyl-CoA decarboxylase (306 aa).

Lys216 carries the post-translational modification N6-acetyllysine; alternate. Lys216 is subject to N6-succinyllysine; alternate.

Belongs to the enoyl-CoA hydratase/isomerase family.

The protein localises to the cytoplasm. The protein resides in the cytosol. The enzyme catalyses (2S)-ethylmalonyl-CoA + H(+) = butanoyl-CoA + CO2. It carries out the reaction (S)-methylmalonyl-CoA + H(+) = propanoyl-CoA + CO2. The catalysed reaction is (2R)-ethylmalonyl-CoA + H(+) = butanoyl-CoA + CO2. Functionally, decarboxylates ethylmalonyl-CoA, a potentially toxic metabolite, to form butyryl-CoA, suggesting it might be involved in metabolite proofreading. Acts preferentially on (S)-ethylmalonyl-CoA but also has some activity on the (R)-isomer. Also has methylmalonyl-CoA decarboxylase activity at lower level. In Bos taurus (Bovine), this protein is Ethylmalonyl-CoA decarboxylase (ECHDC1).